A 66-amino-acid chain; its full sequence is Large ribosomal subunit protein uL29 (66 aa).

It belongs to the universal ribosomal protein uL29 family.

The polypeptide is Large ribosomal subunit protein uL29 (Thermoplasma volcanium (strain ATCC 51530 / DSM 4299 / JCM 9571 / NBRC 15438 / GSS1)).